The sequence spans 248 residues: tRNA (guanine-N(1)-)-methyltransferase (248 aa).

S-adenosyl-L-methionine is bound by residues G113 and 133–138; that span reads LGDFVL.

This sequence belongs to the RNA methyltransferase TrmD family. Homodimer.

The protein localises to the cytoplasm. It carries out the reaction guanosine(37) in tRNA + S-adenosyl-L-methionine = N(1)-methylguanosine(37) in tRNA + S-adenosyl-L-homocysteine + H(+). In terms of biological role, specifically methylates guanosine-37 in various tRNAs. The protein is tRNA (guanine-N(1)-)-methyltransferase of Albidiferax ferrireducens (strain ATCC BAA-621 / DSM 15236 / T118) (Rhodoferax ferrireducens).